Consider the following 85-residue polypeptide: Delta/kappa-theraphotoxin-Pm1a (85 aa).

The N-terminal stretch at 1 to 19 (MKTFVFIVLVALAFVLTAA) is a signal peptide. Residues 20–43 (KEERANPSELVSALAELVMLDAER) constitute a propeptide that is removed on maturation. Disulfide bonds link Cys50–Cys64, Cys57–Cys69, and Cys63–Cys77.

The protein belongs to the neurotoxin 10 (Hwtx-1) family. As to expression, expressed by the venom gland.

It is found in the secreted. Its function is as follows. Multimodal toxin that enhances nociceptor excitability mainly by the simultaneous stimulation of repetitive firing (through Nav1.8/SCN10A channel current enhancement) and impairment of repolarization (by inhibiting delayed rectifier current of Kv2.1/KCNB1), with a potential contribution from tetrodotoxin-sensitive voltage-gated sodium channels (Nav) modified excitability. Enhances Nav1.8/SCN10A currents (EC(50)=1.1 uM), modifies the channel gating by a right-shift in steady-state inactivation and delays open-state inactivation. Also decreases Kv2.1/KCNB1 currents (IC(50)=0.43 uM) and causes a depolarizing shift in the voltage dependence of activation without change in steady-state inactivation. In addition, inhibits peak currents of human sodium channels (Nav1.1 to Nav1.7, IC(50)=0.38-2.3 uM) and delays fast inactivation of Nav1.1/SCN1A, Nav1.3/SCN3A, Nav1.6/SCN8A, and Nav1.7/SCN9A. In small dorsal root ganglion neurons, induces hyperexcitability by enhancing tetrodotoxin-resistant sodium currents, impairing repolarization and lowering the threshold of action potential firing, consistent with the severe pain associated with envenomation. In vivo, elicits nocifensive behavior in mice after intraplantar injection. The sequence is that of Delta/kappa-theraphotoxin-Pm1a from Pelinobius muticus (King baboon spider).